The primary structure comprises 198 residues: Probable GTP-binding protein EngB (198 aa).

In terms of domain architecture, EngB-type G spans 21 to 195 (NFSEVAFLGR…EDIIINQTLG (175 aa)). Residues 29 to 36 (GRSNVGKS), 56 to 60 (GKTQL), 81 to 84 (DLPG), 151 to 154 (TKCD), and 174 to 176 (VSN) each bind GTP. Positions 36 and 58 each coordinate Mg(2+).

The protein belongs to the TRAFAC class TrmE-Era-EngA-EngB-Septin-like GTPase superfamily. EngB GTPase family. It depends on Mg(2+) as a cofactor.

Functionally, necessary for normal cell division and for the maintenance of normal septation. This Campylobacter jejuni subsp. jejuni serotype O:23/36 (strain 81-176) protein is Probable GTP-binding protein EngB.